We begin with the raw amino-acid sequence, 690 residues long: DNA ligase (690 aa).

NAD(+) contacts are provided by residues 36–40 (DSVYD), 85–86 (SL), and glutamate 124. Lysine 126 (N6-AMP-lysine intermediate) is an active-site residue. The NAD(+) site is built by arginine 147, glutamate 184, lysine 308, and lysine 332. Zn(2+) contacts are provided by cysteine 426, cysteine 429, cysteine 444, and cysteine 449. Residues 614 to 690 (NQSNVFDGKS…INENELKLLL (77 aa)) enclose the BRCT domain.

The protein belongs to the NAD-dependent DNA ligase family. LigA subfamily. Mg(2+) serves as cofactor. Requires Mn(2+) as cofactor.

The enzyme catalyses NAD(+) + (deoxyribonucleotide)n-3'-hydroxyl + 5'-phospho-(deoxyribonucleotide)m = (deoxyribonucleotide)n+m + AMP + beta-nicotinamide D-nucleotide.. DNA ligase that catalyzes the formation of phosphodiester linkages between 5'-phosphoryl and 3'-hydroxyl groups in double-stranded DNA using NAD as a coenzyme and as the energy source for the reaction. It is essential for DNA replication and repair of damaged DNA. In Prochlorococcus marinus (strain NATL2A), this protein is DNA ligase.